Consider the following 69-residue polypeptide: Large ribosomal subunit protein uL30 (69 aa).

Belongs to the universal ribosomal protein uL30 family. In terms of assembly, part of the 50S ribosomal subunit.

The polypeptide is Large ribosomal subunit protein uL30 (Rhizobium etli (strain CIAT 652)).